The chain runs to 109 residues: Prothymosin alpha (109 aa).

The tract at residues 1-109 is disordered; the sequence is MSDTSVDASV…AKKQKTDDDD (109 aa). Basic and acidic residues predominate over residues 9 to 35; it reads SVEKTTKDLKSKDKELVEETENGKDKP. Residues 41–81 show a composition bias toward acidic residues; the sequence is ENEENGEDGADNEEEEEVDEEDEEDEGEGDDDEGDEDDEAD. Residues 99 to 109 are compositionally biased toward basic and acidic residues; the sequence is DAKKQKTDDDD.

This sequence belongs to the pro/parathymosin family. In terms of tissue distribution, highly expressed in the testis.

The protein localises to the nucleus. Its function is as follows. May have role in testicular activity. The protein is Prothymosin alpha of Pelophylax lessonae (Pool frog).